The chain runs to 309 residues: E3 ubiquitin-protein ligase SINAT5 (309 aa).

The RING-type zinc-finger motif lies at 46–82 (CPVCTNSMYPPIHQCHNGHTLCSTCKSRVHNRCPTCR). The SBD stretch occupies residues 96 to 289 (VAESLELPCK…KELKLRVTGR (194 aa)). The segment at 99–159 (SLELPCKYYN…LVAHLRDDHK (61 aa)) adopts an SIAH-type zinc-finger fold. Cys-104, Cys-111, His-123, Cys-127, Cys-134, Cys-141, His-153, and His-158 together coordinate Zn(2+).

Belongs to the SINA (Seven in absentia) family. In terms of assembly, homodimer; homodimerization is essential for its function. Interacts with UBC28 and NAC021/NAC022. Interacts with SINAT6. Interacts with ATG6 and TRAF1A. Interacts with WAV3. Interacts with FREE1. In terms of tissue distribution, expressed at low level in the vascular tissue of mature roots. Expressed in lateral roots and in elongation zone of the main root upon stimulation by auxin. Colocalizes with NAC021/NAC022.

Its subcellular location is the nucleus. It localises to the cytoplasm. It carries out the reaction S-ubiquitinyl-[E2 ubiquitin-conjugating enzyme]-L-cysteine + [acceptor protein]-L-lysine = [E2 ubiquitin-conjugating enzyme]-L-cysteine + N(6)-ubiquitinyl-[acceptor protein]-L-lysine.. It participates in protein modification; protein ubiquitination. Its function is as follows. E3 ubiquitin-protein ligase that mediates ubiquitination and subsequent proteasomal degradation of target proteins. E3 ubiquitin ligases accept ubiquitin from an E2 ubiquitin-conjugating enzyme in the form of a thioester and then directly transfers the ubiquitin to targeted substrates. Mediates the ubiquitination and proteasomal-dependent degradation of NAC021/NAC022, a transcription activator that functions downstream of the auxin signals, thereby acting as a down-regulator of auxin signals. Involved in the formation of lateral roots. Is antagonist to SINAT1, SINAT2, SINAT3 and SINAT4 by suppressing FREE1 ubiquitination and degradation mediated by SINAT1, SINAT2, SINAT3 and SINAT4, and promoting FREE1 accumulation. The chain is E3 ubiquitin-protein ligase SINAT5 from Arabidopsis thaliana (Mouse-ear cress).